Reading from the N-terminus, the 625-residue chain is Vacuolar-sorting receptor 7 (625 aa).

An N-terminal signal peptide occupies residues 1-26; the sequence is MGLVNGRASLTFLLAALTIIAMVVEA. The Lumenal portion of the chain corresponds to 27-564; the sequence is RFVVEKESIS…CIERYGSKTA (538 aa). The region spanning 58-166 is the PA domain; the sequence is DYGGFLIGSV…SFGDDLRQGF (109 aa). Residues N292, N400, and N432 are each glycosylated (N-linked (GlcNAc...) asparagine). EGF-like domains lie at 414 to 464 and 467 to 513; these read ETNE…TSCT and GPAR…LTCE. 7 cysteine pairs are disulfide-bonded: C418–C436, C425–C445, C447–C463, C471–C491, C478–C499, C501–C512, and C542–C555. The EGF-like 3; calcium-binding domain occupies 514–556; the sequence is DINECKERSVCQCSGCRCKNSWGGYKCSCSGDRLYINDQDTCI. A helical membrane pass occupies residues 565–585; sequence WWLTFLILAIVAVAGLAGYIF. The Cytoplasmic portion of the chain corresponds to 586–625; that stretch reads YKYRFRSYMDSEIMTIMSQYMPLESQRAREVPSEAEPFTL. A Tyrosine-based internalization motif motif is present at residues 605–608; the sequence is YMPL.

The protein belongs to the VSR (BP-80) family. In terms of tissue distribution, expressed at low levels in seedlings, roots, young leaves, flowers and siliques.

It is found in the golgi apparatus membrane. In terms of biological role, vacuolar-sorting receptor (VSR) involved in clathrin-coated vesicles sorting from Golgi apparatus to vacuoles. The chain is Vacuolar-sorting receptor 7 (VSR7) from Arabidopsis thaliana (Mouse-ear cress).